The following is a 492-amino-acid chain: Ribose import ATP-binding protein RbsA (492 aa).

2 consecutive ABC transporter domains span residues 3 to 239 (IEMK…VGRS) and 249 to 492 (AEIR…TGGQ). 35–42 (GENGAGKS) lines the ATP pocket.

This sequence belongs to the ABC transporter superfamily. Ribose importer (TC 3.A.1.2.1) family. In terms of assembly, the complex is composed of an ATP-binding protein (RbsA), two transmembrane proteins (RbsC) and a solute-binding protein (RbsB).

Its subcellular location is the cell membrane. The catalysed reaction is D-ribose(out) + ATP + H2O = D-ribose(in) + ADP + phosphate + H(+). Part of the ABC transporter complex RbsABC involved in ribose import. Responsible for energy coupling to the transport system. This Lactococcus lactis subsp. lactis (strain IL1403) (Streptococcus lactis) protein is Ribose import ATP-binding protein RbsA.